Here is a 133-residue protein sequence, read N- to C-terminus: Lymphocyte antigen 6 complex locus protein G6d (133 aa).

An N-terminal signal peptide occupies residues 1–19 (MKPQFVGILLSSLLGAALG). In terms of domain architecture, UPAR/Ly6 spans 22 to 116 (MRCYNCGGSP…ASHVAPAGIL (95 aa)). Residues Cys-27 and Cys-35 are joined by a disulfide bond. O-linked (GalNAc...) threonine glycans are attached at residues Thr-40 and Thr-41. 2 disulfide bridges follow: Cys-42–Cys-71 and Cys-77–Cys-96. The GPI-anchor amidated serine moiety is linked to residue Ser-104. Positions 105 to 133 (AVASHVAPAGILAAAATALTCLLPGLWSG) are cleaved as a propeptide — removed in mature form.

In terms of assembly, homodimer. Post-translationally, O-glycosylated. Expressed in the adult lung, and in fetal liver, lung, kidney, brain and spleen.

The protein localises to the cell membrane. It is found in the cell projection. It localises to the filopodium. The protein is Lymphocyte antigen 6 complex locus protein G6d (LY6G6D) of Homo sapiens (Human).